The following is an 80-amino-acid chain: Metallothionein-like protein BIF98 (80 aa).

This sequence belongs to the metallothionein superfamily. Type 15 family.

Its function is as follows. Metallothioneins have a high content of cysteine residues that bind various heavy metals. In Brassica rapa subsp. pekinensis (Chinese cabbage), this protein is Metallothionein-like protein BIF98.